A 489-amino-acid polypeptide reads, in one-letter code: Cobyric acid synthase (489 aa).

The region spanning 252–441 (ALTIGVIQLP…IHGIFANTEF (190 aa)) is the GATase cobBQ-type domain. Cysteine 330 serves as the catalytic Nucleophile. The active site involves histidine 433.

Belongs to the CobB/CobQ family. CobQ subfamily.

It functions in the pathway cofactor biosynthesis; adenosylcobalamin biosynthesis. Functionally, catalyzes amidations at positions B, D, E, and G on adenosylcobyrinic A,C-diamide. NH(2) groups are provided by glutamine, and one molecule of ATP is hydrogenolyzed for each amidation. The protein is Cobyric acid synthase of Herpetosiphon aurantiacus (strain ATCC 23779 / DSM 785 / 114-95).